Here is a 496-residue protein sequence, read N- to C-terminus: Probable CtpA-like serine protease (496 aa).

The segment covering 1-16 (MDDKQHTSSSDDERAE) has biased composition (basic and acidic residues). The tract at residues 1–27 (MDDKQHTSSSDDERAEIATSNQDQETN) is disordered. Residues 18-27 (ATSNQDQETN) are compositionally biased toward polar residues. A helical membrane pass occupies residues 39–59 (FISILIGTILITAVITVVAYI). The region spanning 124-206 (TKSFNEGVSG…TEVTLTVQRG (83 aa)) is the PDZ domain. Active-site charge relay system residues include S329, D340, and K354.

It belongs to the peptidase S41A family.

It is found in the cell membrane. In Staphylococcus aureus (strain COL), this protein is Probable CtpA-like serine protease.